Consider the following 396-residue polypeptide: Activity-regulated cytoskeleton-associated protein (396 aa).

Residues 54–78 are a coiled coil; it reads SKQVERELKGLHRSVGKLESNLDGY. An interaction with SH3GL1 or SH3GL3 region spans residues 89–100; the sequence is KSIKACLCRCQE. Residues 195–214 form an interaction with DNM2 region; that stretch reads QPWVPGEDGQPSPGVDTQIF. Residue Ser-260 is modified to Phosphoserine. Glycyl lysine isopeptide (Lys-Gly) (interchain with G-Cter in ubiquitin) cross-links involve residues Lys-268 and Lys-269. Thr-278 bears the Phosphothreonine mark. Positions 356-396 are disordered; it reads QDDLEQAAEPAGPHLPVEDEAETLTPAPNSESVASDRTQPE. A compositionally biased stretch (polar residues) spans 381 to 396; sequence PAPNSESVASDRTQPE.

This sequence belongs to the ARC/ARG3.1 family. In terms of assembly, homooligomer; homooligomerizes into virion-like capsids. Interacts with SH3GL1/endophilin-2, SH3GL3/endophilin-3 and DNM2/DYN2. Interacts with CAMK2B (in the kinase inactive state); leading to target ARC to inactive synapses. Interacts with PSEN1. In terms of processing, palmitoylation anchors the protein into the membrane by allowing direct insertion into the hydrophobic core of the lipid bilayer. Ubiquitinated by UBE3A, leading to its degradation by the proteasome, thereby promoting AMPA receptors (AMPARs) expression at synapses. Ubiquitinated by RNF216 at Lys-268 and Lys-269 limiting ARC protein levels induced by synaptic activity and thus regulating ARC-dependent forms of synaptic plasticity. Post-translationally, phosphorylation at Ser-260 by CaMK2 prevents homooligomerization into virion-like capsids by disrupting an interaction surface essential for high-order oligomerization. Phosphorylation by CaMK2 inhibits synaptic activity.

It is found in the extracellular vesicle membrane. It localises to the postsynaptic cell membrane. The protein localises to the synapse. Its subcellular location is the postsynaptic density. The protein resides in the early endosome membrane. It is found in the cell projection. It localises to the dendrite. The protein localises to the cytoplasm. Its subcellular location is the cytoskeleton. The protein resides in the cell cortex. It is found in the dendritic spine. It localises to the cytoplasmic vesicle. The protein localises to the secretory vesicle. Its subcellular location is the acrosome. The protein resides in the clathrin-coated vesicle membrane. Functionally, master regulator of synaptic plasticity that self-assembles into virion-like capsids that encapsulate RNAs and mediate intercellular RNA transfer in the nervous system. ARC protein is released from neurons in extracellular vesicles that mediate the transfer of ARC mRNA into new target cells, where ARC mRNA can undergo activity-dependent translation. ARC capsids are endocytosed and are able to transfer ARC mRNA into the cytoplasm of neurons. Acts as a key regulator of synaptic plasticity: required for protein synthesis-dependent forms of long-term potentiation (LTP) and depression (LTD) and for the formation of long-term memory. Regulates synaptic plasticity by promoting endocytosis of AMPA receptors (AMPARs) in response to synaptic activity: this endocytic pathway maintains levels of surface AMPARs in response to chronic changes in neuronal activity through synaptic scaling, thereby contributing to neuronal homeostasis. Acts as a postsynaptic mediator of activity-dependent synapse elimination in the developing cerebellum by mediating elimination of surplus climbing fiber synapses. Accumulates at weaker synapses, probably to prevent their undesired enhancement. This suggests that ARC-containing virion-like capsids may be required to eliminate synaptic material. Required to transduce experience into long-lasting changes in visual cortex plasticity and for long-term memory. Involved in postsynaptic trafficking and processing of amyloid-beta A4 (APP) via interaction with PSEN1. In addition to its role in synapses, also involved in the regulation of the immune system: specifically expressed in skin-migratory dendritic cells and regulates fast dendritic cell migration, thereby regulating T-cell activation. The chain is Activity-regulated cytoskeleton-associated protein from Homo sapiens (Human).